The following is a 101-amino-acid chain: Small ribosomal subunit protein bS18c (101 aa).

Basic residues predominate over residues 1–19; sequence MDKSKRPFRKSKRSFRRRL. The tract at residues 1 to 23 is disordered; sequence MDKSKRPFRKSKRSFRRRLPPIG.

The protein belongs to the bacterial ribosomal protein bS18 family. As to quaternary structure, part of the 30S ribosomal subunit.

The protein localises to the plastid. It is found in the chloroplast. The protein is Small ribosomal subunit protein bS18c of Ceratophyllum demersum (Rigid hornwort).